The chain runs to 210 residues: Glutathione S-transferase 4 (210 aa).

Residues 1-80 (MDFYYLPLSA…YLVEKYGKQD (80 aa)) form the GST N-terminal domain. Glutathione contacts are provided by residues Ser-9, 50–52 (HTI), and 64–66 (ESR). In terms of domain architecture, GST C-terminal spans 87–208 (CPKKRALINQ…AGALEMKTLI (122 aa)).

It belongs to the GST superfamily. Theta family. Homodimer.

It catalyses the reaction RX + glutathione = an S-substituted glutathione + a halide anion + H(+). In terms of biological role, conjugation of reduced glutathione to a wide number of exogenous and endogenous hydrophobic electrophiles. This Musca domestica (House fly) protein is Glutathione S-transferase 4 (Gst4).